Here is a 363-residue protein sequence, read N- to C-terminus: 3-dehydroquinate synthase (363 aa).

Residues 134 to 135 (TT), lysine 147, and lysine 156 each bind NAD(+). The Zn(2+) site is built by glutamate 189, histidine 254, and histidine 271.

The protein belongs to the sugar phosphate cyclases superfamily. Dehydroquinate synthase family. It depends on Co(2+) as a cofactor. The cofactor is Zn(2+). NAD(+) is required as a cofactor.

It localises to the cytoplasm. It carries out the reaction 7-phospho-2-dehydro-3-deoxy-D-arabino-heptonate = 3-dehydroquinate + phosphate. Its pathway is metabolic intermediate biosynthesis; chorismate biosynthesis; chorismate from D-erythrose 4-phosphate and phosphoenolpyruvate: step 2/7. Catalyzes the conversion of 3-deoxy-D-arabino-heptulosonate 7-phosphate (DAHP) to dehydroquinate (DHQ). The protein is 3-dehydroquinate synthase of Prochlorococcus marinus (strain MIT 9215).